Consider the following 472-residue polypeptide: 6-phosphogluconate dehydrogenase, decarboxylating (472 aa).

NADP(+) is bound by residues 10–15 (GMAVMG), 33–35 (NRT), 74–76 (VQA), and asparagine 102. Residues asparagine 102 and 128-130 (SGG) each bind substrate. Residue lysine 184 is the Proton acceptor of the active site. 187 to 188 (HN) is a binding site for substrate. Glutamate 191 acts as the Proton donor in catalysis. 5 residues coordinate substrate: tyrosine 192, lysine 262, arginine 289, arginine 447, and histidine 453.

The protein belongs to the 6-phosphogluconate dehydrogenase family. In terms of assembly, homodimer.

The enzyme catalyses 6-phospho-D-gluconate + NADP(+) = D-ribulose 5-phosphate + CO2 + NADPH. It participates in carbohydrate degradation; pentose phosphate pathway; D-ribulose 5-phosphate from D-glucose 6-phosphate (oxidative stage): step 3/3. Functionally, catalyzes the oxidative decarboxylation of 6-phosphogluconate to ribulose 5-phosphate and CO(2), with concomitant reduction of NADP to NADPH. The sequence is that of 6-phosphogluconate dehydrogenase, decarboxylating (gnd) from Lactococcus lactis subsp. cremoris (strain MG1363).